A 331-amino-acid chain; its full sequence is Phosphoribosylformylglycinamidine cyclo-ligase (331 aa).

The protein belongs to the AIR synthase family.

It is found in the cytoplasm. The catalysed reaction is 2-formamido-N(1)-(5-O-phospho-beta-D-ribosyl)acetamidine + ATP = 5-amino-1-(5-phospho-beta-D-ribosyl)imidazole + ADP + phosphate + H(+). It functions in the pathway purine metabolism; IMP biosynthesis via de novo pathway; 5-amino-1-(5-phospho-D-ribosyl)imidazole from N(2)-formyl-N(1)-(5-phospho-D-ribosyl)glycinamide: step 2/2. The chain is Phosphoribosylformylglycinamidine cyclo-ligase from Clostridium kluyveri (strain NBRC 12016).